Here is a 1162-residue protein sequence, read N- to C-terminus: Leptin receptor (1162 aa).

The N-terminal stretch at 1 to 21 is a signal peptide; sequence MMCQKFYVVLLHWEFLYVIAA. The Extracellular segment spans residues 22–839; that stretch reads LNLAYPISPW…AIDKQQNDAG (818 aa). 5 disulfide bridges follow: cysteine 37-cysteine 90, cysteine 89-cysteine 99, cysteine 131-cysteine 142, cysteine 186-cysteine 195, and cysteine 188-cysteine 193. Asparagine 41, asparagine 56, asparagine 73, and asparagine 98 each carry an N-linked (GlcNAc...) asparagine glycan. The N-linked (GlcNAc...) asparagine glycan is linked to asparagine 187. The region spanning 238–331 is the Fibronectin type-III 1 domain; sequence PPLGLHMEVT…SPQVFTTQDV (94 aa). Asparagine 275 and asparagine 345 each carry an N-linked (GlcNAc...) asparagine glycan. The Ig-like domain maps to 329-427; that stretch reads QDVVYFPPKI…HRYAELYVID (99 aa). 2 disulfide bridges follow: cysteine 350-cysteine 410 and cysteine 411-cysteine 416. An N-linked (GlcNAc...) asparagine glycan is attached at asparagine 431. 3 disulfides stabilise this stretch: cysteine 434-cysteine 445, cysteine 471-cysteine 526, and cysteine 486-cysteine 496. Positions 465–482 are leptin-binding; that stretch reads HRRSLYCPDSPSIHPTSE. N-linked (GlcNAc...) asparagine glycans are attached at residues asparagine 514, asparagine 622, asparagine 657, asparagine 668, asparagine 686, asparagine 695, asparagine 698, and asparagine 726. Fibronectin type-III domains follow at residues 537 to 632, 637 to 729, and 738 to 832; these read PPSN…TLVM, PMRG…NLTF, and AVES…DAID. A WSXWS motif motif is present at residues 620–624; the sequence is WSNWS. A helical transmembrane segment spans residues 840-860; sequence LYVIVPIIISSCVLLLGTLLI. Residues 861-1162 lie on the Cytoplasmic side of the membrane; that stretch reads SHQRMKKLFW…MENKMCDLTV (302 aa). The Box 1 motif signature appears at 869–877; the sequence is FWDDVPNPK. Serine 880 carries the phosphoserine modification. The tract at residues 891-896 is required for JAK2 activation; that stretch reads ETFEHL. The tract at residues 896–904 is required for STAT3 phosphorylation; the sequence is LFTKHAESV. Position 985 is a phosphotyrosine; by JAK2 (tyrosine 985). Tyrosine 1077 carries the phosphotyrosine modification. Tyrosine 1138 is modified (phosphotyrosine; by JAK2).

The protein belongs to the type I cytokine receptor family. Type 2 subfamily. Present as a mixture of monomers and dimers. The phosphorylated receptor binds a number of SH2 domain-containing proteins such as JAK2, STAT3, PTPN11, and SOCS3. Interaction with SOCS3 inhibits JAK/STAT signaling and MAPK cascade. On ligand binding, phosphorylated on two conserved C-terminal tyrosine residues (isoform B only) by JAK2. Tyr-985 is required for complete binding and activation of PTPN11, ERK/FOS activation,for interaction with SOCS3 and SOCS3 mediated inhibition of leptin signaling. Phosphorylation on Tyr-1138 is required for STAT3 binding/activation. Phosphorylation of Tyr-1077 has a more accessory role. Isoform A: highest level of expression in lung and kidney, also present in heart, brain, spleen, liver, muscle, choroid plexus and hypothalamus. Isoform B: highest levels of expression in hypothalamus and lower levels in brain, testes and adipose tissue. Expressed by neurons of the parabrachial nucleus. Expressed by peripheral blood mononuclear cells and CD4(+) T-cells. Isoform E: expressed in adipose tissue, liver, hypothalamus, cerebral microvessels, heart, and testes.

Its subcellular location is the cell membrane. It is found in the basolateral cell membrane. The protein resides in the secreted. Its function is as follows. Receptor for hormone LEP/leptin. On ligand binding, mediates LEP central and peripheral effects through the activation of different signaling pathways such as JAK2/STAT3 and MAPK cascade/FOS. In the hypothalamus, LEP acts as an appetite-regulating factor that induces a decrease in food intake and an increase in energy consumption by inducing anorexinogenic factors and suppressing orexigenic neuropeptides, also regulates bone mass and secretion of hypothalamo-pituitary-adrenal hormones. In the periphery, increases basal metabolism, influences reproductive function, regulates pancreatic beta-cell function and insulin secretion, is pro-angiogenic and affects innate and adaptive immunity. Control of energy homeostasis and melanocortin production (stimulation of POMC and full repression of AgRP transcription) is mediated by STAT3 signaling, whereas distinct signals regulate NPY and the control of fertility, growth and glucose homeostasis. Involved in the regulation of counter-regulatory response to hypoglycemia by inhibiting neurons of the parabrachial nucleus. Has a specific effect on T lymphocyte responses, differentially regulating the proliferation of naive and memory T-cells. Leptin increases Th1 and suppresses Th2 cytokine production. Functionally, may transport LEP across the blood-brain barrier. Binds LEP and mediates LEP endocytosis. Does not induce phosphorylation of and activate STAT3. In terms of biological role, antagonizes Isoform A and isoform B-mediated LEP binding and endocytosis. The chain is Leptin receptor (Lepr) from Mus musculus (Mouse).